Consider the following 418-residue polypeptide: Glutamyl-tRNA reductase (418 aa).

Substrate contacts are provided by residues 49 to 52, serine 109, 114 to 116, and glutamine 120; these read TCNR and EPQ. Cysteine 50 serves as the catalytic Nucleophile. NADP(+) is bound at residue 189 to 194; it reads GAGETI.

It belongs to the glutamyl-tRNA reductase family. In terms of assembly, homodimer.

It catalyses the reaction (S)-4-amino-5-oxopentanoate + tRNA(Glu) + NADP(+) = L-glutamyl-tRNA(Glu) + NADPH + H(+). Its pathway is porphyrin-containing compound metabolism; protoporphyrin-IX biosynthesis; 5-aminolevulinate from L-glutamyl-tRNA(Glu): step 1/2. Functionally, catalyzes the NADPH-dependent reduction of glutamyl-tRNA(Glu) to glutamate 1-semialdehyde (GSA). The polypeptide is Glutamyl-tRNA reductase (Klebsiella pneumoniae (strain 342)).